The chain runs to 394 residues: Alanine racemase 2 (394 aa).

The Proton acceptor; specific for D-alanine role is filled by K39. Residue K39 is modified to N6-(pyridoxal phosphate)lysine. R139 provides a ligand contact to substrate. The active-site Proton acceptor; specific for L-alanine is the Y272. M320 contributes to the substrate binding site.

It belongs to the alanine racemase family. Pyridoxal 5'-phosphate serves as cofactor.

It carries out the reaction L-alanine = D-alanine. The protein operates within amino-acid biosynthesis; D-alanine biosynthesis; D-alanine from L-alanine: step 1/1. In terms of biological role, catalyzes the interconversion of L-alanine and D-alanine. May also act on other amino acids. The sequence is that of Alanine racemase 2 (alr2) from Bacillus subtilis (strain 168).